A 397-amino-acid polypeptide reads, in one-letter code: uncharacterized protein (397 aa).

The next 9 helical transmembrane spans lie at 1–21, 39–59, 76–96, 103–123, 124–144, 194–214, 219–239, 255–275, and 301–321; these read MGAS…LMLV, VIQS…VVVF, EALS…FGVP, VLLF…FVGA, ALIE…LVMA, MMTP…LFAF, ALFG…FSLL, LVYL…KLML, and QSLT…FWSA.

Belongs to the TerC family.

It is found in the cell membrane. This is an uncharacterized protein from Mycobacterium tuberculosis (strain CDC 1551 / Oshkosh).